Reading from the N-terminus, the 453-residue chain is Divalent metal cation transporter MntH (453 aa).

The next 11 helical transmembrane spans lie at 39–59 (LAFL…GNWI), 66–86 (AQYG…AMLL), 114–134 (AIMF…AEVI), 146–166 (IPLI…LFIM), 175–195 (AIVG…VYIS), 217–237 (GILY…NLYL), 270–290 (LSIA…LFFG), 310–330 (PALG…ALLA), 362–382 (LITR…FKGN), 388–408 (QLLV…LIPL), and 427–447 (INII…YLII).

It belongs to the NRAMP family.

The protein localises to the cell membrane. H(+)-stimulated, divalent metal cation uptake system. The sequence is that of Divalent metal cation transporter MntH from Staphylococcus epidermidis (strain ATCC 12228 / FDA PCI 1200).